The sequence spans 310 residues: Probable deoxyhypusine synthase (310 aa).

The active-site Nucleophile is the Lys280.

The protein belongs to the deoxyhypusine synthase family. The cofactor is NAD(+).

The catalysed reaction is [eIF5A protein]-L-lysine + spermidine = [eIF5A protein]-deoxyhypusine + propane-1,3-diamine. It functions in the pathway protein modification; eIF5A hypusination. In terms of biological role, catalyzes the NAD-dependent oxidative cleavage of spermidine and the subsequent transfer of the butylamine moiety of spermidine to the epsilon-amino group of a specific lysine residue of the eIF-5A precursor protein to form the intermediate deoxyhypusine residue. The protein is Probable deoxyhypusine synthase (dys) of Aeropyrum pernix (strain ATCC 700893 / DSM 11879 / JCM 9820 / NBRC 100138 / K1).